We begin with the raw amino-acid sequence, 331 residues long: HTH-type transcriptional regulator GntR (331 aa).

One can recognise an HTH lacI-type domain in the interval 6–60; it reads PVLQDVADRVGVTKMTVSRFLRNPEQVSVALRGKIAAALDELGYIPNRAPDILSN. Residues 8 to 27 constitute a DNA-binding region (H-T-H motif); it reads LQDVADRVGVTKMTVSRFLR.

The protein operates within carbohydrate acid metabolism; D-gluconate degradation [regulation]. In terms of biological role, negative regulator for the gluconate utilization system GNT-I, the gntUKR operon. The polypeptide is HTH-type transcriptional regulator GntR (gntR) (Escherichia coli O6:H1 (strain CFT073 / ATCC 700928 / UPEC)).